The following is a 571-amino-acid chain: Leucine aminopeptidase A2, chloroplastic (571 aa).

The transit peptide at 1-42 directs the protein to the chloroplast; the sequence is MATLRVSSLFASSSSSLHSNPSVFTKYQSSPKWAFSFPVTPL. Lys-342 and Asp-347 together coordinate Mg(2+). Lys-354 is a catalytic residue. Mg(2+)-binding residues include Asp-367, Asp-427, and Glu-429. Arg-431 is an active-site residue.

The protein belongs to the peptidase M17 family. As to quaternary structure, homohexamer (dimer of homotrimers). Mg(2+) is required as a cofactor. Expressed during floral development. Expressed in healthy and senescent leaves, cotyledons (emergence from seed coats), pistils, sepals, petals, stamens, and floral buds (at protein level).

It is found in the plastid. Its subcellular location is the chloroplast. It catalyses the reaction Release of an N-terminal amino acid, Xaa-|-Yaa-, in which Xaa is preferably Leu, but may be other amino acids including Pro although not Arg or Lys, and Yaa may be Pro. Amino acid amides and methyl esters are also readily hydrolyzed, but rates on arylamides are exceedingly low.. The enzyme catalyses Release of N-terminal proline from a peptide.. Catalyzes the removal of unsubstituted N-terminal amino acids from various peptides. When associated as homohexamer, catalyzes the proteolyzes of Xaa-Leu dipeptides. Possesses leucine aminopeptidase activity against the model substrate leucine-amido methyl coumarin. Presumably involved in the processing and regular turnover of intracellular proteins. Regulates wound signaling and has a role in insect defense. Functionally, functions as a molecular chaperone to protect proteins from heat-induced damage. This chain is Leucine aminopeptidase A2, chloroplastic, found in Solanum lycopersicum (Tomato).